The sequence spans 884 residues: Formin-like protein 11 (884 aa).

An N-terminal signal peptide occupies residues 1 to 18 (MVYFRQIFLMIIVVSLHC). The tract at residues 89–143 (AESASFSPWPAPSPSPFPNGGPIESPAYPPAPPRPIPPHLRRPLPQRTHPLEQPE) is disordered. 2 stretches are compositionally biased toward pro residues: residues 97 to 107 (WPAPSPSPFPN) and 115 to 126 (AYPPAPPRPIPP). A helical transmembrane segment spans residues 158–178 (ILVPVVASTASAIGFVVCVVG). 3 disordered regions span residues 307-384 (SSDD…FSNK), 416-469 (SFPI…APLP), and 512-532 (MQSSTKNEEGKSKTPSPGKHL). A compositionally biased stretch (low complexity) spans 329-343 (SNASSASGSVNVGSS). Positions 346-358 (FSEHKLDIPECSR) are enriched in basic and acidic residues. Pro residues-rich tracts occupy residues 367–379 (APPPPPPPPPPLP) and 425–436 (QPRPPPPPPPPQ). One can recognise an FH2 domain in the interval 461-884 (LGKDGAPLPK…NSPSPLAPFR (424 aa)).

This sequence belongs to the formin-like family. Class-I subfamily.

The protein localises to the membrane. In terms of biological role, might be involved in the organization and polarity of the actin cytoskeleton. The chain is Formin-like protein 11 (FH11) from Arabidopsis thaliana (Mouse-ear cress).